A 416-amino-acid chain; its full sequence is Serine hydroxymethyltransferase (416 aa).

Residues leucine 121 and 125-127 (GHL) contribute to the (6S)-5,6,7,8-tetrahydrofolate site. Lysine 230 is subject to N6-(pyridoxal phosphate)lysine. (6S)-5,6,7,8-tetrahydrofolate is bound at residue 355–357 (SPF).

Belongs to the SHMT family. In terms of assembly, homodimer. It depends on pyridoxal 5'-phosphate as a cofactor.

It localises to the cytoplasm. The catalysed reaction is (6R)-5,10-methylene-5,6,7,8-tetrahydrofolate + glycine + H2O = (6S)-5,6,7,8-tetrahydrofolate + L-serine. Its pathway is one-carbon metabolism; tetrahydrofolate interconversion. The protein operates within amino-acid biosynthesis; glycine biosynthesis; glycine from L-serine: step 1/1. Catalyzes the reversible interconversion of serine and glycine with tetrahydrofolate (THF) serving as the one-carbon carrier. This reaction serves as the major source of one-carbon groups required for the biosynthesis of purines, thymidylate, methionine, and other important biomolecules. Also exhibits THF-independent aldolase activity toward beta-hydroxyamino acids, producing glycine and aldehydes, via a retro-aldol mechanism. This Streptococcus thermophilus (strain ATCC BAA-250 / LMG 18311) protein is Serine hydroxymethyltransferase.